The primary structure comprises 970 residues: Type III restriction-modification enzyme EcoPI Res subunit (970 aa).

The helicase-like domain stretch occupies residues 75 to 540; sequence ARSNVIDVSM…EVGRGLRLPV (466 aa). The interval 894 to 918 is endonuclease domain; that stretch reads TYSPDFAYVVKTAEGDYLNFIIETK.

The protein belongs to the type III restriction-modification system Res protein family. In terms of assembly, a heterotetramer with stoichiometry Res(2)Mod(2). Mg(2+) is required as a cofactor. S-adenosyl-L-methionine serves as cofactor.

The enzyme catalyses Endonucleolytic cleavage of DNA to give specific double-stranded fragments with terminal 5'-phosphates.. Functionally, a type III restriction enzyme that recognizes 2 inversely oriented double-stranded sequences 5'-AGACC-3' and cleaves DNA 25-27 base pairs downstream of one site, producing a single-strand 5' protrusion of two nucleotides. DNA restriction requires both the Res and Mod subunits. DNA topology affects its action; relaxed and negatively supercoiled DNA are digested but positively supercoiled DNA is not a good substrate. After binding to one recognition site undergoes random one-dimensional diffusion along DNA until it collides with a stationary enzyme bound to the second DNA site, which is when DNA cleavage occurs. In Enterobacteriaceae (Bacteriophage P1), this protein is Type III restriction-modification enzyme EcoPI Res subunit.